Here is a 518-residue protein sequence, read N- to C-terminus: Lysine 5,6-aminomutase alpha subunit (518 aa).

Pyridoxal 5'-phosphate is bound by residues 184 to 189 (RTTGQS), serine 238, tyrosine 263, arginine 268, and asparagine 299.

It belongs to the KamD family. Heterotetramer of 2 alpha and 2 beta subunits. Adenosylcob(III)alamin serves as cofactor. The cofactor is pyridoxal 5'-phosphate.

It catalyses the reaction (3S)-3,6-diaminohexanoate = (3S,5S)-3,5-diaminohexanoate. It carries out the reaction D-lysine = (2R,5S)-2,5-diaminohexanoate. It functions in the pathway amino-acid degradation; L-lysine degradation via acetate pathway. Its function is as follows. Catalyzes the migration of the L-beta-lysine and D-lysine epsilon amino group to the delta carbon to produce 3,5-diaminohexanoate and 2,5-diaminohexanoate, respectively. The polypeptide is Lysine 5,6-aminomutase alpha subunit (Fusobacterium nucleatum subsp. nucleatum (strain ATCC 25586 / DSM 15643 / BCRC 10681 / CIP 101130 / JCM 8532 / KCTC 2640 / LMG 13131 / VPI 4355)).